The following is a 308-amino-acid chain: Transcription factor zip-2 (308 aa).

Residues 217 to 229 (QSSSSSTVETTIT) are compositionally biased toward polar residues. Residues 217 to 277 (QSSSSSTVET…RESKEERERL (61 aa)) are disordered. The region spanning 242 to 305 (SSDYRHKRDK…EDYKRLVMMF (64 aa)) is the bZIP domain. Residues 246–276 (RHKRDKNNLASQKSRQKRQAKIRESKEERER) form a basic motif region. Residues 266 to 277 (KIRESKEERERL) show a composition bias toward basic and acidic residues. The tract at residues 277 to 291 (LEKRKVQLQAMVLTL) is leucine-zipper.

It belongs to the bZIP family. C/EBP subfamily. As to expression, expressed in the pharynx and throughout the intestine.

The protein localises to the nucleus. Its function is as follows. Transcription factor that binds to the promoter and the enhancer regions of target genes. May act together with the bZIP transcription factor, cebp-2. Involved in responding to mitochondrial damage. Plays a role in the delay of age-associated mitochondrial fragmentation and muscle decline. Has a protective role in response to infection by the Gram-negative bacterium P.aeruginosa. Required to prevent P.aeruginosa ToxA-mediated lethality. Required for the activation of several infection response genes including irg-1 and irg-2 following P.aeruginosa infection; target gene activation may involve effects of the bacterial toxin, ToxA, and perhaps other toxins. The chain is Transcription factor zip-2 from Caenorhabditis elegans.